The following is a 452-amino-acid chain: Tryptophan biosynthesis protein TrpCF (452 aa).

An indole-3-glycerol phosphate synthase region spans residues 1 to 253 (MPSVLENILK…KACIKLILGE (253 aa)). The N-(5'-phosphoribosyl)anthranilate isomerase stretch occupies residues 254-448 (NKVCGLTRIK…KDKIKQLARI (195 aa)).

It in the N-terminal section; belongs to the TrpC family. The protein in the C-terminal section; belongs to the TrpF family.

It catalyses the reaction N-(5-phospho-beta-D-ribosyl)anthranilate = 1-(2-carboxyphenylamino)-1-deoxy-D-ribulose 5-phosphate. It carries out the reaction 1-(2-carboxyphenylamino)-1-deoxy-D-ribulose 5-phosphate + H(+) = (1S,2R)-1-C-(indol-3-yl)glycerol 3-phosphate + CO2 + H2O. It functions in the pathway amino-acid biosynthesis; L-tryptophan biosynthesis; L-tryptophan from chorismate: step 3/5. Its pathway is amino-acid biosynthesis; L-tryptophan biosynthesis; L-tryptophan from chorismate: step 4/5. In terms of biological role, bifunctional enzyme that catalyzes two sequential steps of tryptophan biosynthetic pathway. The first reaction is catalyzed by the isomerase, coded by the TrpF domain; the second reaction is catalyzed by the synthase, coded by the TrpC domain. The chain is Tryptophan biosynthesis protein TrpCF (trpC) from Helicobacter pylori (strain J99 / ATCC 700824) (Campylobacter pylori J99).